The chain runs to 294 residues: MTVEGFFDPATCTISYLLFDSGSGECALIDSVLDYDPKSGRTRTASADQLIARVAALGARVRWLLETHVHADHLSAAPYLKTRVGGEIAIGRHVTRVQDVFGKLFNAGPAFAHDGSQFDRLLDDGDTLALGALSIRAMHTPGHTPACMTYVVTEAHAAHDARDAAAFVGDTLFMPDYGTARCDFPGGDARSLYRSIRKVLSLPPATRLYMCHDYQPNGRAIQYASTVADELRENVHIREGVTEDDFVAMRTARDATLDMPVLMLPSVQVNMRAGRLPEPEDNGVRYLKIPLDAI.

H68, H70, D72, H73, H143, D170, and H212 together coordinate a divalent metal cation.

The protein belongs to the metallo-beta-lactamase superfamily. It depends on a divalent metal cation as a cofactor.

Probable hydrolase. Does not have beta-lactamase activity. The protein is Probable metallo-hydrolase BURPS1710b_2304 of Burkholderia pseudomallei (strain 1710b).